Here is a 66-residue protein sequence, read N- to C-terminus: MKAADVRALSADQLKDELAKLKKEQFNLRFQKATGQLEKSSRINEVRKDIARVKTIARQKAAEAKA.

This sequence belongs to the universal ribosomal protein uL29 family.

The chain is Large ribosomal subunit protein uL29 from Rhizobium rhizogenes (strain K84 / ATCC BAA-868) (Agrobacterium radiobacter).